A 156-amino-acid chain; its full sequence is uncharacterized protein (156 aa).

An N-terminal signal peptide occupies residues 1–27 (MKLLVLRLILIISTIFVLLNLSCMVNG). N-linked (GlcNAc...) asparagine glycans are attached at residues Asn20, Asn83, Asn103, Asn106, and Asn134.

The protein localises to the secreted. This is an uncharacterized protein from Dictyostelium discoideum (Social amoeba).